A 917-amino-acid polypeptide reads, in one-letter code: Ion channel POLLUX (917 aa).

The interval 1-154 (MIPLPVAAAN…SSSPVARPQH (154 aa)) is disordered. Residues 7-19 (AAANSNSNSNSNS) are compositionally biased toward low complexity. A compositionally biased stretch (polar residues) spans 78 to 89 (HQWNYPSFLGTT). Positions 119–136 (KTNTNTNTNTNTNTNTNT) are enriched in low complexity. The next 4 helical transmembrane spans lie at 160–180 (PPIF…SSYL), 230–250 (LYIV…LDYL), 290–310 (LALL…LYAV), and 342–362 (VVSV…LGLV). RCK N-terminal domains lie at 383–524 (RNHI…ETVV) and 643–792 (PEKI…DKSI). A coiled-coil region spans residues 413–435 (VIVVLAEKEKEEMEMDITKLEFD).

It belongs to the castor/pollux (TC 1.A.1.23) family. Homooligomer. As to expression, mainly expressed in nodules. Also detected in infected and uninfected roots, leaves, seed pods, and flower buds.

It is found in the nucleus membrane. In terms of biological role, ion channel with permeability for potassium. Involved in perinuclear calcium spiking but not in cytosolic calcium influx. Required for early signal transduction events leading to endosymbiosis. Acts early in a signal transduction chain leading from the perception of Nod factor to the activation of calcium spiking. Also involved in fungal entry into root epidermal cells during the establishment of the arbuscular mycorrhizal symbiosis. The protein is Ion channel POLLUX (POLLUX) of Lotus japonicus (Lotus corniculatus var. japonicus).